The following is a 242-amino-acid chain: Uridylate kinase (242 aa).

11 to 14 (KLSG) is an ATP binding site. The segment at 19–24 (GEKGVG) is involved in allosteric activation by GTP. G53 is a UMP binding site. The ATP site is built by G54 and R58. Residues D73 and 134-141 (IGSPYFST) each bind UMP. ATP is bound by residues N162, Y168, and D171.

It belongs to the UMP kinase family. As to quaternary structure, homohexamer.

The protein localises to the cytoplasm. It catalyses the reaction UMP + ATP = UDP + ADP. It participates in pyrimidine metabolism; CTP biosynthesis via de novo pathway; UDP from UMP (UMPK route): step 1/1. Allosterically activated by GTP. Inhibited by UTP. In terms of biological role, catalyzes the reversible phosphorylation of UMP to UDP. This is Uridylate kinase from Streptococcus pyogenes serotype M1.